The sequence spans 598 residues: Elongation factor 4 (598 aa).

The tr-type G domain maps to 2–184 (KNIRNFSIIA…EIVRKIPAPE (183 aa)). Residues 14–19 (DHGKST) and 131–134 (NKID) each bind GTP.

The protein belongs to the TRAFAC class translation factor GTPase superfamily. Classic translation factor GTPase family. LepA subfamily.

The protein localises to the cell inner membrane. The enzyme catalyses GTP + H2O = GDP + phosphate + H(+). Its function is as follows. Required for accurate and efficient protein synthesis under certain stress conditions. May act as a fidelity factor of the translation reaction, by catalyzing a one-codon backward translocation of tRNAs on improperly translocated ribosomes. Back-translocation proceeds from a post-translocation (POST) complex to a pre-translocation (PRE) complex, thus giving elongation factor G a second chance to translocate the tRNAs correctly. Binds to ribosomes in a GTP-dependent manner. In Histophilus somni (strain 2336) (Haemophilus somnus), this protein is Elongation factor 4.